Reading from the N-terminus, the 174-residue chain is NADH-ubiquinone oxidoreductase chain 6 (174 aa).

Transmembrane regions (helical) follow at residues M1–S21, S24–L44, G47–F67, V86–V106, G111–G131, and W151–A171.

Belongs to the complex I subunit 6 family. In terms of assembly, core subunit of respiratory chain NADH dehydrogenase (Complex I) which is composed of 45 different subunits.

The protein localises to the mitochondrion inner membrane. It catalyses the reaction a ubiquinone + NADH + 5 H(+)(in) = a ubiquinol + NAD(+) + 4 H(+)(out). Functionally, core subunit of the mitochondrial membrane respiratory chain NADH dehydrogenase (Complex I) which catalyzes electron transfer from NADH through the respiratory chain, using ubiquinone as an electron acceptor. Essential for the catalytic activity and assembly of complex I. This is NADH-ubiquinone oxidoreductase chain 6 (MT-ND6) from Pan paniscus (Pygmy chimpanzee).